The following is a 218-amino-acid chain: Glutathione S-transferase Mu 1 (218 aa).

Positions 2–88 constitute a GST N-terminal domain; the sequence is PMILGYWNVR…YLARKHHLCG (87 aa). Residues 7–8, 43–46, lysine 50, and 59–60 contribute to the glutathione site; these read YW, RSQW, and NL. Serine 67 is subject to Phosphoserine. 72-73 contacts glutathione; sequence QS. A GST C-terminal domain is found at 90–208; the sequence is TEEERIRADI…KSSRYLSTPI (119 aa). Tyrosine 116 is a substrate binding site. 2 positions are modified to phosphoserine: serine 205 and serine 210.

The protein belongs to the GST superfamily. Mu family. In terms of assembly, homodimer or heterodimer.

It localises to the cytoplasm. The enzyme catalyses RX + glutathione = an S-substituted glutathione + a halide anion + H(+). It carries out the reaction prostaglandin A2 + glutathione = prostaglandin A2-S-(R)-glutathione. It catalyses the reaction prostaglandin J2 + glutathione = prostaglandin J2-S-(R)-glutathione. The catalysed reaction is prostaglandin J2 + glutathione = prostaglandin J2-S-(S)-glutathione. The enzyme catalyses prostaglandin A2 + glutathione = prostaglandin A2-S-(S)-glutathione. It carries out the reaction 11(S)-hydroxy-14(S),15(S)-epoxy-(5Z,8Z,12E)-eicosatrienoate + glutathione = (11S,15S)-dihydroxy-14(R)-S-glutathionyl-(5Z,8Z,12E)-eicosatrienoate. In terms of biological role, conjugation of reduced glutathione to a wide number of exogenous and endogenous hydrophobic electrophiles. The olfactory GST may be crucial for the acuity of the olfactory process. Participates in the formation of novel hepoxilin regioisomers. This Rattus norvegicus (Rat) protein is Glutathione S-transferase Mu 1.